The following is a 114-amino-acid chain: Ribonuclease P protein component (114 aa).

The protein belongs to the RnpA family. Consists of a catalytic RNA component (M1 or rnpB) and a protein subunit.

The catalysed reaction is Endonucleolytic cleavage of RNA, removing 5'-extranucleotides from tRNA precursor.. Functionally, RNaseP catalyzes the removal of the 5'-leader sequence from pre-tRNA to produce the mature 5'-terminus. It can also cleave other RNA substrates such as 4.5S RNA. The protein component plays an auxiliary but essential role in vivo by binding to the 5'-leader sequence and broadening the substrate specificity of the ribozyme. This Staphylococcus haemolyticus (strain JCSC1435) protein is Ribonuclease P protein component.